The following is a 437-amino-acid chain: UDP-glucosyl transferase 79L3 (437 aa).

His-18 functions as the Proton acceptor in the catalytic mechanism. The active-site Charge relay is the Asp-117. Positions 254, 312, 313, 330, 335, and 338 each coordinate UDP.

Belongs to the UDP-glycosyltransferase family. Mainly expressed in flowers, flower buds and young leaves, and, to a lesser extent, in old leaves, stems and roots.

Its pathway is secondary metabolite biosynthesis; terpenoid biosynthesis. Component of the oleanane-type triterpene saponins (e.g. saponarioside A and saponarioside B) biosynthetic pathway, leading to the production of natural products with detergent properties used as traditional sources of soap. A glycosyltransferase that mediates the conversion of QA-triFR to QA-triFRX via the elongation of the C-28 sugar chain with a D-xylose. In Saponaria officinalis (Common soapwort), this protein is UDP-glucosyl transferase 79L3.